Reading from the N-terminus, the 339-residue chain is Geranylgeranyl pyrophosphate synthase AN1592 (339 aa).

Positions 41, 44, and 73 each coordinate isopentenyl diphosphate. Residues D80 and D84 each contribute to the Mg(2+) site. A dimethylallyl diphosphate-binding site is contributed by R89. Isopentenyl diphosphate is bound at residue R90. The dimethylallyl diphosphate site is built by K192, T193, and Q228. D231 provides a ligand contact to Mg(2+). Positions 235, 245, and 255 each coordinate dimethylallyl diphosphate.

Belongs to the FPP/GGPP synthase family. Requires Mg(2+) as cofactor.

It carries out the reaction isopentenyl diphosphate + dimethylallyl diphosphate = (2E)-geranyl diphosphate + diphosphate. The catalysed reaction is isopentenyl diphosphate + (2E)-geranyl diphosphate = (2E,6E)-farnesyl diphosphate + diphosphate. The enzyme catalyses isopentenyl diphosphate + (2E,6E)-farnesyl diphosphate = (2E,6E,10E)-geranylgeranyl diphosphate + diphosphate. It functions in the pathway secondary metabolite biosynthesis. Functionally, geranylgeranyl pyrophosphate synthase; part of the gene cluster that mediates the biosynthesis of erinacines, cyathane-xylosides that show unique biological activities, including leishmanicidal activity, stimulating activity for nerve growth-factor synthesis, and agonistic activity toward the kappa opioid receptor. The geranylgeranyl diphosphate (GGPP) synthase eriE catalyzes the first step in erinacines biosynthesis via conversion of farnesyl pyrophosphate and isopentyl pyrophosphate into geranylgeranyl pyrophosphate (GGPP). GGPP is then substrate of the diterpene cyclase eriG for the production of cyatha-3,12-diene. The cytochrome P450 monooxygenase eriI then hydroxylates cyatha-3,12-diene at C-14 of the seven-membered ring to produce erinacol, which is further hydroxylated at C-15 by the cytochrome P450 monooxygenase eriC to yield cyathadiol. The cytochrome P450 monooxygenase eriA then catalyzes C-11 hydroxylation in the presence of the short chain dehydrogenase/reductase (SDR) eriH, which leads to the production of cyathatriol. The acetyltransferase eriL converts cyathatriol into 11-O-acetyl-cyathatriol. The SDR eriH catalyzes further oxidation of 11-O-acetyl-cyathatriol into 1-O-acetylcyathin A3. Finally, the glycosyl transferase eriJ tranfers xylose from UDP-xylose onto C-14 of 11-O-acetyl-cyathatriol to form eracine Q. EriJ is also able to convert 11-O-acetyl-cyathatriol to eracine Q2 by using UDP-D-glucose as cosubstrate, but at a lower rate. In the absence of eriL and eriJ, the SDR eriH is able to convert cyathatriol to cyathin A3; this is likely a switching mechanism in the biosynthesis of cyathins (C-14 ketogroup)and erinacines (C-14 glycosylated group). The roles of the SDR eriB, the polyprenyl transferase eriF and the dehydrogenase eriK have still to be identified. This Hericium erinaceus (Lion's mane mushroom) protein is Geranylgeranyl pyrophosphate synthase AN1592.